The chain runs to 82 residues: Cytochrome b559 subunit alpha (82 aa).

A helical transmembrane segment spans residues 22 to 36 (VIHSITIPALFIAGW). Heme is bound at residue histidine 24.

Belongs to the PsbE/PsbF family. In terms of assembly, heterodimer of an alpha subunit and a beta subunit. PSII is composed of 1 copy each of membrane proteins PsbA, PsbB, PsbC, PsbD, PsbE, PsbF, PsbH, PsbI, PsbJ, PsbK, PsbL, PsbM, PsbT, PsbX, PsbY, PsbZ, Psb30/Ycf12, peripheral proteins PsbO, CyanoQ (PsbQ), PsbU, PsbV and a large number of cofactors. It forms dimeric complexes. Heme b serves as cofactor.

It is found in the cellular thylakoid membrane. Its function is as follows. This b-type cytochrome is tightly associated with the reaction center of photosystem II (PSII). PSII is a light-driven water:plastoquinone oxidoreductase that uses light energy to abstract electrons from H(2)O, generating O(2) and a proton gradient subsequently used for ATP formation. It consists of a core antenna complex that captures photons, and an electron transfer chain that converts photonic excitation into a charge separation. In Trichodesmium erythraeum (strain IMS101), this protein is Cytochrome b559 subunit alpha.